The chain runs to 242 residues: DnaJ homolog subfamily B member 6 (242 aa).

Residues Glu3–Gly69 form the J domain.

Homooligomer.

The protein resides in the cytoplasm. Its subcellular location is the perinuclear region. The protein localises to the nucleus. Its function is as follows. Has a stimulatory effect on the ATPase activity of HSP70 in a dose-dependent and time-dependent manner and hence acts as a co-chaperone of HSP70. Plays an indispensable role in the organization of KRT8/KRT18 filaments. Acts as an endogenous molecular chaperone for neuronal proteins including huntingtin. Suppresses aggregation and toxicity of polyglutamine-containing, aggregation-prone proteins. Also reduces cellular toxicity and caspase-3 activity. This chain is DnaJ homolog subfamily B member 6, found in Xenopus tropicalis (Western clawed frog).